Consider the following 495-residue polypeptide: Fibronectin type III and SPRY domain-containing protein 1 (495 aa).

Residues 4–99 (QKESLRKIIT…ALESSEELLE (96 aa)) adopt a coiled-coil conformation. In terms of domain architecture, COS spans 105-162 (LCSSENDSFTQAAKDIKDSVTMAPAFRLSLKAKASDSMNHMMVDFTHERNLLQSITFL). Positions 164-268 (VPATPEIHVA…EPVTLETHAF (105 aa)) constitute a Fibronectin type-III domain. The region spanning 281-476 (LKVEDLSVEW…VQTGLQVPSI (196 aa)) is the B30.2/SPRY domain. Residues 306 to 332 (KNRTNSPMHSPARTAMMSPKRAPSARV) form a disordered region. At Ser490 the chain carries Phosphoserine.

Oligomerization is required for binding to microtubules.

Its subcellular location is the cytoplasm. The protein resides in the cytoskeleton. It is found in the microtubule organizing center. It localises to the centrosome. The protein localises to the nucleus. Its subcellular location is the cleavage furrow. May be involved in microtubule organization and stabilization. This chain is Fibronectin type III and SPRY domain-containing protein 1 (fsd1), found in Danio rerio (Zebrafish).